We begin with the raw amino-acid sequence, 517 residues long: Crotonobetaine/carnitine--CoA ligase (517 aa).

It belongs to the ATP-dependent AMP-binding enzyme family.

It catalyses the reaction 4-(trimethylamino)butanoate + ATP + CoA = 4-(trimethylamino)butanoyl-CoA + AMP + diphosphate. It carries out the reaction crotonobetaine + ATP + CoA = crotonobetainyl-CoA + AMP + diphosphate. The enzyme catalyses (R)-carnitine + ATP + CoA = (R)-carnitinyl-CoA + AMP + diphosphate. Its pathway is amine and polyamine metabolism; carnitine metabolism. Its function is as follows. Catalyzes the transfer of CoA to carnitine, generating the initial carnitinyl-CoA needed for the CaiB reaction cycle. Also has activity toward crotonobetaine and gamma-butyrobetaine. The protein is Crotonobetaine/carnitine--CoA ligase of Salmonella arizonae (strain ATCC BAA-731 / CDC346-86 / RSK2980).